A 569-amino-acid chain; its full sequence is Peroxisomal targeting signal receptor (569 aa).

Cys-5 is covalently cross-linked (Glycyl cysteine thioester (Cys-Gly) (interchain with G-Cter in ubiquitin)). Residues 6 to 28 are amphipathic helix 1 (AH1); sequence SVGANPLAQLNKRVQQDRTLQHG. Residue Lys-17 forms a Glycyl lysine isopeptide (Lys-Gly) (interchain with G-Cter in ubiquitin) linkage. Positions 53–71 are amphipathic helix 2 (AH2); sequence KFQMEQFMAGKASSGGNMF. Positions 112–116 match the WxxxF/Y motif 1 motif; sequence WSQEF. Residues 150-154 form an amphipathic helix 3 (AH3) region; the sequence is PMNMM. Residues 181 to 185 carry the WxxxF/Y motif 2 motif; the sequence is WEQQF. An amphipathic helix 4 (AH4) region spans residues 229-245; that stretch reads FQQIWNDIHDQTDDLDS. TPR repeat units follow at residues 281–315, 316–349, 417–450, 452–484, and 486–518; these read NTDA…DPGH, VDAW…DPHN, PDVQ…RPDD, CMWN…KPTF, and RARY…HEVE.

This sequence belongs to the peroxisomal targeting signal receptor family. As to quaternary structure, interacts (via WxxxF/Y and LVxEF motifs) with PEX14; promoting translocation through the PEX13-PEX14 docking complex. Monoubiquitinated at Cys-5 by PEX2 during PEX5 passage through the retrotranslocation channel: monoubiquitination acts as a signal for PEX5 extraction and is required for proper export from peroxisomes and recycling. When PEX5 recycling is compromised, polyubiquitinated at Lys-17 by PEX10 during its passage through the retrotranslocation channel, leading to its degradation.

The protein localises to the cytoplasm. It is found in the cytosol. It localises to the peroxisome matrix. In terms of biological role, receptor that mediates peroxisomal import of proteins containing a C-terminal PTS1-type tripeptide peroxisomal targeting signal (SKL-type). Binds to cargo proteins containing a PTS1 peroxisomal targeting signal in the cytosol, and translocates them into the peroxisome matrix by passing through the PEX13-PEX14 docking complex along with cargo proteins. PEX5 receptor is then retrotranslocated into the cytosol, leading to release of bound cargo in the peroxisome matrix, and reset for a subsequent peroxisome import cycle. This chain is Peroxisomal targeting signal receptor (PEX5), found in Eremothecium gossypii (strain ATCC 10895 / CBS 109.51 / FGSC 9923 / NRRL Y-1056) (Yeast).